A 218-amino-acid polypeptide reads, in one-letter code: Small ribosomal subunit protein uS3 (218 aa).

In terms of domain architecture, KH type-2 spans 40–109 (IRKIINTEYS…DVSINIREVK (70 aa)).

Belongs to the universal ribosomal protein uS3 family. Part of the 30S ribosomal subunit. Forms a tight complex with proteins S10 and S14.

Functionally, binds the lower part of the 30S subunit head. Binds mRNA in the 70S ribosome, positioning it for translation. The polypeptide is Small ribosomal subunit protein uS3 (Orientia tsutsugamushi (strain Boryong) (Rickettsia tsutsugamushi)).